Here is a 351-residue protein sequence, read N- to C-terminus: Peptide chain release factor 1 (351 aa).

N5-methylglutamine is present on Q229. The interval 279 to 300 (ADAERAADRKSQVGSGDRSERI) is disordered.

The protein belongs to the prokaryotic/mitochondrial release factor family. In terms of processing, methylated by PrmC. Methylation increases the termination efficiency of RF1.

The protein localises to the cytoplasm. Peptide chain release factor 1 directs the termination of translation in response to the peptide chain termination codons UAG and UAA. The sequence is that of Peptide chain release factor 1 from Paracoccus denitrificans (strain Pd 1222).